The sequence spans 189 residues: Cancer/testis antigen family 45 member A3 (189 aa).

Residues 81 to 119 (KDRMMQKPGSNAPVGGNVTSSFSGDDLECRETASSPKSQ) are disordered.

It belongs to the CT45 family. In terms of tissue distribution, testis specific. Expressed in cancer cell lines.

The protein localises to the nucleus. The protein is Cancer/testis antigen family 45 member A3 of Homo sapiens (Human).